A 303-amino-acid chain; its full sequence is tRNA dimethylallyltransferase (303 aa).

10 to 17 (GPTASGKS) lines the ATP pocket. Residue 12-17 (TASGKS) participates in substrate binding. The interval 35 to 38 (DSMQ) is interaction with substrate tRNA.

Belongs to the IPP transferase family. Monomer. Mg(2+) serves as cofactor.

The catalysed reaction is adenosine(37) in tRNA + dimethylallyl diphosphate = N(6)-dimethylallyladenosine(37) in tRNA + diphosphate. In terms of biological role, catalyzes the transfer of a dimethylallyl group onto the adenine at position 37 in tRNAs that read codons beginning with uridine, leading to the formation of N6-(dimethylallyl)adenosine (i(6)A). This is tRNA dimethylallyltransferase from Methylobacterium nodulans (strain LMG 21967 / CNCM I-2342 / ORS 2060).